Reading from the N-terminus, the 216-residue chain is Ras-related protein RABE1c (216 aa).

22-29 (GDSGVGKS) contributes to the GTP binding site. An Effector region motif is present at residues 44–52 (FITTIGIDF). GTP-binding positions include 70–74 (DTAGQ), 128–131 (NKAD), and 159–160 (SA). S-geranylgeranyl cysteine attachment occurs at residues C213 and C214.

This sequence belongs to the small GTPase superfamily. Rab family. As to quaternary structure, interacts with PI5K2.

It localises to the golgi apparatus membrane. The protein localises to the cell membrane. In terms of biological role, involved in membrane trafficking from the Golgi to the plasma membrane. This chain is Ras-related protein RABE1c (RABE1C), found in Arabidopsis thaliana (Mouse-ear cress).